Reading from the N-terminus, the 201-residue chain is Ribosome maturation factor RimP (201 aa).

Residues 180 to 201 (LRRGSAPAQDEEGEDEAPGAPL) form a disordered region. The span at 188-201 (QDEEGEDEAPGAPL) shows a compositional bias: acidic residues.

The protein belongs to the RimP family.

Its subcellular location is the cytoplasm. In terms of biological role, required for maturation of 30S ribosomal subunits. This is Ribosome maturation factor RimP from Methylobacterium sp. (strain 4-46).